The following is a 252-amino-acid chain: Imidazole glycerol phosphate synthase subunit HisF (252 aa).

Residues Asp11 and Asp130 contribute to the active site.

The protein belongs to the HisA/HisF family. Heterodimer of HisH and HisF.

Its subcellular location is the cytoplasm. The enzyme catalyses 5-[(5-phospho-1-deoxy-D-ribulos-1-ylimino)methylamino]-1-(5-phospho-beta-D-ribosyl)imidazole-4-carboxamide + L-glutamine = D-erythro-1-(imidazol-4-yl)glycerol 3-phosphate + 5-amino-1-(5-phospho-beta-D-ribosyl)imidazole-4-carboxamide + L-glutamate + H(+). The protein operates within amino-acid biosynthesis; L-histidine biosynthesis; L-histidine from 5-phospho-alpha-D-ribose 1-diphosphate: step 5/9. Its function is as follows. IGPS catalyzes the conversion of PRFAR and glutamine to IGP, AICAR and glutamate. The HisF subunit catalyzes the cyclization activity that produces IGP and AICAR from PRFAR using the ammonia provided by the HisH subunit. The chain is Imidazole glycerol phosphate synthase subunit HisF from Geobacillus thermodenitrificans (strain NG80-2).